Reading from the N-terminus, the 168-residue chain is Crossover junction endodeoxyribonuclease RuvC (168 aa).

Active-site residues include Asp11, Glu71, and Asp144. Asp11, Glu71, and Asp144 together coordinate Mg(2+).

It belongs to the RuvC family. Homodimer which binds Holliday junction (HJ) DNA. The HJ becomes 2-fold symmetrical on binding to RuvC with unstacked arms; it has a different conformation from HJ DNA in complex with RuvA. In the full resolvosome a probable DNA-RuvA(4)-RuvB(12)-RuvC(2) complex forms which resolves the HJ. Mg(2+) is required as a cofactor.

It localises to the cytoplasm. It carries out the reaction Endonucleolytic cleavage at a junction such as a reciprocal single-stranded crossover between two homologous DNA duplexes (Holliday junction).. Its function is as follows. The RuvA-RuvB-RuvC complex processes Holliday junction (HJ) DNA during genetic recombination and DNA repair. Endonuclease that resolves HJ intermediates. Cleaves cruciform DNA by making single-stranded nicks across the HJ at symmetrical positions within the homologous arms, yielding a 5'-phosphate and a 3'-hydroxyl group; requires a central core of homology in the junction. The consensus cleavage sequence is 5'-(A/T)TT(C/G)-3'. Cleavage occurs on the 3'-side of the TT dinucleotide at the point of strand exchange. HJ branch migration catalyzed by RuvA-RuvB allows RuvC to scan DNA until it finds its consensus sequence, where it cleaves and resolves the cruciform DNA. The sequence is that of Crossover junction endodeoxyribonuclease RuvC from Protochlamydia amoebophila (strain UWE25).